Here is a 73-residue protein sequence, read N- to C-terminus: Putative sulfur carrier protein AF_0556 (73 aa).

Cys-11 serves as the catalytic Cysteine persulfide intermediate.

The protein belongs to the sulfur carrier protein TusA family.

In Archaeoglobus fulgidus (strain ATCC 49558 / DSM 4304 / JCM 9628 / NBRC 100126 / VC-16), this protein is Putative sulfur carrier protein AF_0556.